Reading from the N-terminus, the 65-residue chain is Sodium channel alpha-toxin Acra4 (65 aa).

The LCN-type CS-alpha/beta domain maps to 2–63; that stretch reads RDGYIVDDKN…PIKDPSYKCH (62 aa). Disulfide bonds link Cys12–Cys62, Cys16–Cys34, Cys20–Cys44, and Cys24–Cys46. Arg65 is a propeptide (removed by a carboxypeptidase).

The protein belongs to the long (4 C-C) scorpion toxin superfamily. Sodium channel inhibitor family. Alpha subfamily. Expressed by the venom gland.

Its subcellular location is the secreted. In terms of biological role, alpha toxins bind voltage-independently at site-3 of sodium channels (Nav) and inhibit the inactivation of the activated channels, thereby blocking neuronal transmission. Electrophysiological studies of this were performed using sodium-channels expressed in F11 cell culture, by patch-clamp recordings. Affinity of this toxin toward sodium channels in F11 cell line is in the order of 1 uM concentration. This Androctonus crassicauda (Arabian fat-tailed scorpion) protein is Sodium channel alpha-toxin Acra4.